The chain runs to 123 residues: Seminal vesicle secretory protein 5 (123 aa).

Residues 1-21 (MSPTGFFLLTVLLVLVTEAAS) form the signal peptide. The tract at residues 50-123 (GSSSTFGAFS…TKVKTRITRK (74 aa)) is disordered. Low complexity predominate over residues 64-75 (SRSNFKSKSPSS). Residues 77 to 87 (TREKVNEESRS) are compositionally biased toward basic and acidic residues.

It belongs to the SVP2/SVP5/SVP6 family. In terms of tissue distribution, testis.

The protein localises to the secreted. It localises to the extracellular space. In Rattus norvegicus (Rat), this protein is Seminal vesicle secretory protein 5 (Svs5).